Reading from the N-terminus, the 308-residue chain is 50 kDa gamma-zein (308 aa).

An N-terminal signal peptide occupies residues 1 to 19 (MKLVLVVLAFIALVSSVSC). A disordered region spans residues 27-159 (CGQQQSHEQQ…QPQQPQQYQQ (133 aa)). Residues 55–119 (HHQQQQHQQQ…QHHQQSQGHV (65 aa)) show a composition bias toward low complexity. Residues 120 to 129 (QQHEQSHEQH) are compositionally biased toward basic and acidic residues. A compositionally biased stretch (low complexity) spans 130–159 (QGQSHEQQHQQQFQGHDKQQQPQQPQQYQQ). C286 carries the GPI-anchor amidated cysteine lipid modification. A propeptide spans 287 to 308 (GLYHSYYQNNPCSSNDISGVCN) (removed in mature form).

It belongs to the gliadin/glutenin family. Interacts with OP10 (via N-terminus).

Its subcellular location is the cell membrane. In terms of biological role, zeins are major seed storage proteins. The protein is 50 kDa gamma-zein of Zea mays (Maize).